The following is a 323-amino-acid chain: Acetyl-coenzyme A carboxylase carboxyl transferase subunit alpha (323 aa).

The 255-residue stretch at Arg-39–Gln-293 folds into the CoA carboxyltransferase C-terminal domain.

It belongs to the AccA family. As to quaternary structure, acetyl-CoA carboxylase is a heterohexamer composed of biotin carboxyl carrier protein (AccB), biotin carboxylase (AccC) and two subunits each of ACCase subunit alpha (AccA) and ACCase subunit beta (AccD).

The protein localises to the cytoplasm. It carries out the reaction N(6)-carboxybiotinyl-L-lysyl-[protein] + acetyl-CoA = N(6)-biotinyl-L-lysyl-[protein] + malonyl-CoA. It participates in lipid metabolism; malonyl-CoA biosynthesis; malonyl-CoA from acetyl-CoA: step 1/1. Its function is as follows. Component of the acetyl coenzyme A carboxylase (ACC) complex. First, biotin carboxylase catalyzes the carboxylation of biotin on its carrier protein (BCCP) and then the CO(2) group is transferred by the carboxyltransferase to acetyl-CoA to form malonyl-CoA. The polypeptide is Acetyl-coenzyme A carboxylase carboxyl transferase subunit alpha (Burkholderia orbicola (strain AU 1054)).